The following is a 407-amino-acid chain: D-mannose isomerase (407 aa).

Active-site proton donor/acceptor residues include histidine 251 and histidine 383.

Belongs to the N-acylglucosamine 2-epimerase family. In terms of assembly, homodimer.

The enzyme catalyses D-mannose = D-fructose. It catalyses the reaction D-lyxose = D-xylulose. Significantly inhibited by divalent metal ions such as Cu(2+), Cd(2+) or Ca(2+). Its function is as follows. Catalyzes the reversible isomerization of D-mannose to D-fructose. Shows weaker activity on D-lyxose, but cannot use N-acetyl D-glucosamine. This is D-mannose isomerase from Thermobifida fusca (Thermomonospora fusca).